Reading from the N-terminus, the 336-residue chain is DNA-directed RNA polymerase subunit alpha (336 aa).

The alpha N-terminal domain (alpha-NTD) stretch occupies residues M1–D232. An alpha C-terminal domain (alpha-CTD) region spans residues F248–Y336.

Belongs to the RNA polymerase alpha chain family. In terms of assembly, homodimer. The RNAP catalytic core consists of 2 alpha, 1 beta, 1 beta' and 1 omega subunit. When a sigma factor is associated with the core the holoenzyme is formed, which can initiate transcription.

The enzyme catalyses RNA(n) + a ribonucleoside 5'-triphosphate = RNA(n+1) + diphosphate. Functionally, DNA-dependent RNA polymerase catalyzes the transcription of DNA into RNA using the four ribonucleoside triphosphates as substrates. The chain is DNA-directed RNA polymerase subunit alpha from Sinorhizobium medicae (strain WSM419) (Ensifer medicae).